The sequence spans 161 residues: MRRFIFMSLGLLVLAFSLSGIGANQNCPSGWFPHNISCYKLFTERKNWDQAQRTCMEEQENGQLASITDADTAVKLSNKLSGNWNFFDIWFGLSLSKTRGFWLWPDGSMVTFTNWGKGEPNNFWDMESCAALTAASGYLSWNDKNCGLLHYFICQTQSRGG.

The signal sequence occupies residues 1–23 (MRRFIFMSLGLLVLAFSLSGIGA). 3 cysteine pairs are disulfide-bonded: cysteine 27–cysteine 38, cysteine 55–cysteine 154, and cysteine 129–cysteine 146. The 122-residue stretch at 34 to 155 (HNISCYKLFT…CGLLHYFICQ (122 aa)) folds into the C-type lectin domain. Asparagine 35 carries N-linked (GlcNAc...) asparagine glycosylation. Residues 117 to 119 (KGE) carry the Mannose-binding motif. Residues glutamate 127, asparagine 142, and aspartate 143 each contribute to the Ca(2+) site.

This sequence belongs to the true venom lectin family. In terms of tissue distribution, expressed by the venom gland.

It is found in the secreted. Functionally, mannose-binding lectin which recognizes specific carbohydrate structures and agglutinates a variety of animal cells by binding to cell-surface glycoproteins and glycolipids. May be a calcium-dependent lectin. This chain is C-type lectin lectoxin-Lio3, found in Erythrolamprus poecilogyrus (Water snake).